A 427-amino-acid polypeptide reads, in one-letter code: 3-phosphoshikimate 1-carboxyvinyltransferase (427 aa).

Residues Lys-22, Ser-23, and Arg-27 each coordinate 3-phosphoshikimate. Residue Lys-22 participates in phosphoenolpyruvate binding. 2 residues coordinate phosphoenolpyruvate: Gly-96 and Arg-124. 3-phosphoshikimate is bound by residues Ser-169, Ser-170, Gln-171, Ser-197, Asp-313, Asn-336, and Lys-340. Position 171 (Gln-171) interacts with phosphoenolpyruvate. Asp-313 functions as the Proton acceptor in the catalytic mechanism. Residues Arg-344, Arg-386, and Lys-411 each contribute to the phosphoenolpyruvate site.

The protein belongs to the EPSP synthase family. As to quaternary structure, monomer.

It localises to the cytoplasm. It carries out the reaction 3-phosphoshikimate + phosphoenolpyruvate = 5-O-(1-carboxyvinyl)-3-phosphoshikimate + phosphate. It participates in metabolic intermediate biosynthesis; chorismate biosynthesis; chorismate from D-erythrose 4-phosphate and phosphoenolpyruvate: step 6/7. Functionally, catalyzes the transfer of the enolpyruvyl moiety of phosphoenolpyruvate (PEP) to the 5-hydroxyl of shikimate-3-phosphate (S3P) to produce enolpyruvyl shikimate-3-phosphate and inorganic phosphate. This chain is 3-phosphoshikimate 1-carboxyvinyltransferase, found in Escherichia coli O8 (strain IAI1).